The following is a 464-amino-acid chain: Dolichyl-diphosphooligosaccharide--protein glycosyltransferase subunit 1B (464 aa).

The first 24 residues, 1-24, serve as a signal peptide directing secretion; the sequence is MAARIGIFSVFVAVLLSISAFSSA. Residues 25–436 are Lumenal-facing; it reads QDLQIVNAER…TFKPIYMLAE (412 aa). 2 N-linked (GlcNAc...) asparagine glycosylation sites follow: N106 and N298. K310 participates in a covalent cross-link: Glycyl lysine isopeptide (Lys-Gly) (interchain with G-Cter in ubiquitin). Residue N352 is glycosylated (N-linked (GlcNAc...) asparagine). The helical transmembrane segment at 437-457 threads the bilayer; sequence PFMLVSAFFLVFVASLAYVHI. Over 458 to 464 the chain is Cytoplasmic; it reads DLNIVRK.

The protein belongs to the OST1 family. As to quaternary structure, component of the oligosaccharyltransferase (OST) complex.

It is found in the endoplasmic reticulum membrane. It functions in the pathway protein modification; protein glycosylation. Its function is as follows. Subunit of the oligosaccharyl transferase (OST) complex that catalyzes the initial transfer of a defined glycan (Glc(3)Man(9)GlcNAc(2) in eukaryotes) from the lipid carrier dolichol-pyrophosphate to an asparagine residue within an Asn-X-Ser/Thr consensus motif in nascent polypeptide chains, the first step in protein N-glycosylation. N-glycosylation occurs cotranslationally and the complex associates with the Sec61 complex at the channel-forming translocon complex that mediates protein translocation across the endoplasmic reticulum (ER). All subunits are required for a maximal enzyme activity. This Arabidopsis thaliana (Mouse-ear cress) protein is Dolichyl-diphosphooligosaccharide--protein glycosyltransferase subunit 1B (OST1B).